A 231-amino-acid chain; its full sequence is Pathogenesis-related thaumatin-like protein 3.7 (231 aa).

The signal sequence occupies residues 1–27 (MATVSDLALLLVAGLVAISLHMQEAGA). 8 cysteine pairs are disulfide-bonded: Cys-36-Cys-230, Cys-77-Cys-87, Cys-92-Cys-98, Cys-143-Cys-218, Cys-148-Cys-201, Cys-156-Cys-166, Cys-170-Cys-179, and Cys-180-Cys-188.

This sequence belongs to the thaumatin family.

In terms of biological role, may be involved in disease resistance. In Cryptomeria japonica (Japanese cedar), this protein is Pathogenesis-related thaumatin-like protein 3.7.